Consider the following 493-residue polypeptide: MQVIETLAEGLKRELKVIIPAADMEAQMNERLADVKDKVRINGFRPGKVPAGHLKKMYGKSVMAELVNEIVRDRPSAILSERGEKSATQPEVAMTEDEAEADKILNAQADFEFTLAYEVIPAIELKPVDGIKIVREVVEVSEDEVNEQIMKIAESARTFATKDGVAADGDRVTMDYLGKVDGVPFDGGKDEDAELVIGSNRFIPGFEEQLVGLKAGDEKVINVTFPTEYPAANLAGKDATFDITVKEVAAPAETEINDELATKLGLESVDKLKEIVRGQIESQYGNVTRQKIKRQILDQLDEMYKFEAPSRLVDAEFDNIWRQINTDLQQSGKTFEDEETTEDAAREEYRALAERRVRLGLVLSEIGEKAAIDVTEEEMQRALYAQLQQFPGQEKQIIDFFRNTPGASASLRAPIFEEKVMDKLISEVNVTDKTVTKEELLAEDEDGDDTKPAKKSAKKKAAKAEDASAEGEEAAPKKKAAAKKKAADEGDAE.

One can recognise a PPIase FKBP-type domain in the interval 169 to 254 (GDRVTMDYLG…VKEVAAPAET (86 aa)). The segment at 439–493 (ELLAEDEDGDDTKPAKKSAKKKAAKAEDASAEGEEAAPKKKAAAKKKAADEGDAE) is disordered.

The protein belongs to the FKBP-type PPIase family. Tig subfamily.

The protein resides in the cytoplasm. It catalyses the reaction [protein]-peptidylproline (omega=180) = [protein]-peptidylproline (omega=0). In terms of biological role, involved in protein export. Acts as a chaperone by maintaining the newly synthesized protein in an open conformation. Functions as a peptidyl-prolyl cis-trans isomerase. This Allorhizobium ampelinum (strain ATCC BAA-846 / DSM 112012 / S4) (Agrobacterium vitis (strain S4)) protein is Trigger factor.